The chain runs to 108 residues: Parvalbumin beta (108 aa).

A1 bears the N-acetylalanine mark. C11 and C33 are disulfide-bonded. EF-hand domains follow at residues 38–73 (KSADDIKKAFVFIDQDKSGFIEEDELKLFLQVFKAG) and 77–108 (LTDAETKAFLKAGDSDGDGAIGVEEWVALVKA). D51, D53, S55, F57, E59, E62, D90, D92, D94, A96, and E101 together coordinate Ca(2+).

It belongs to the parvalbumin family.

In muscle, parvalbumin is thought to be involved in relaxation after contraction. It binds two calcium ions. The protein is Parvalbumin beta of Merlangius merlangus (Whiting).